A 283-amino-acid polypeptide reads, in one-letter code: Small ribosomal subunit protein uS3 (283 aa).

The region spanning 39–107 is the KH type-2 domain; that stretch reads VRAYLKTKLK…PVHVNIEEIR (69 aa). A disordered region spans residues 209 to 283; it reads PSGEPPVDLT…GAVPAEKAGE (75 aa). Over residues 217–235 the composition is skewed to basic and acidic residues; that stretch reads LTKEDDTKRRGPRRDDGKP. A compositionally biased stretch (low complexity) spans 244–260; it reads PEGQPGAAAAPGAAPAA.

Belongs to the universal ribosomal protein uS3 family. Part of the 30S ribosomal subunit. Forms a tight complex with proteins S10 and S14.

Functionally, binds the lower part of the 30S subunit head. Binds mRNA in the 70S ribosome, positioning it for translation. The polypeptide is Small ribosomal subunit protein uS3 (Herminiimonas arsenicoxydans).